The sequence spans 92 residues: C-C motif chemokine 4 (92 aa).

A signal peptide spans 1 to 23; the sequence is MKLCVTVLSLLVLVAAFCSPALS. 2 cysteine pairs are disulfide-bonded: Cys-34–Cys-58 and Cys-35–Cys-74.

This sequence belongs to the intercrine beta (chemokine CC) family. Homodimer. Interacts with CCR5.

The protein resides in the secreted. Its function is as follows. Monokine with inflammatory and chemokinetic properties. The chain is C-C motif chemokine 4 (CCL4) from Sus scrofa (Pig).